The primary structure comprises 285 residues: Probable endonuclease 4 (285 aa).

9 residues coordinate Zn(2+): histidine 69, histidine 109, glutamate 145, aspartate 179, histidine 182, histidine 216, aspartate 229, histidine 231, and glutamate 261.

This sequence belongs to the AP endonuclease 2 family. It depends on Zn(2+) as a cofactor.

The catalysed reaction is Endonucleolytic cleavage to 5'-phosphooligonucleotide end-products.. Its function is as follows. Endonuclease IV plays a role in DNA repair. It cleaves phosphodiester bonds at apurinic or apyrimidinic (AP) sites, generating a 3'-hydroxyl group and a 5'-terminal sugar phosphate. In Salmonella arizonae (strain ATCC BAA-731 / CDC346-86 / RSK2980), this protein is Probable endonuclease 4.